Reading from the N-terminus, the 391-residue chain is Probable malate dehydrogenase 1 (391 aa).

68–74 lines the NAD(+) pocket; that stretch reads GAAGQIA. Residues Arg149 and Arg155 each coordinate substrate. NAD(+)-binding positions include Asn162, Gln169, and 186–188; that span reads VGN. Asn188 and Arg219 together coordinate substrate. Catalysis depends on His244, which acts as the Proton acceptor.

It belongs to the LDH/MDH superfamily. MDH type 2 family. As to quaternary structure, homodimer.

The catalysed reaction is (S)-malate + NAD(+) = oxaloacetate + NADH + H(+). Its function is as follows. Catalyzes the reversible oxidation of malate to oxaloacetate. The protein is Probable malate dehydrogenase 1 (mdhA) of Dictyostelium discoideum (Social amoeba).